Consider the following 495-residue polypeptide: ATP synthase subunit beta, chloroplastic (495 aa).

172–179 (GGAGVGKT) contributes to the ATP binding site.

The protein belongs to the ATPase alpha/beta chains family. F-type ATPases have 2 components, CF(1) - the catalytic core - and CF(0) - the membrane proton channel. CF(1) has five subunits: alpha(3), beta(3), gamma(1), delta(1), epsilon(1). CF(0) has four main subunits: a(1), b(1), b'(1) and c(9-12).

The protein localises to the plastid. The protein resides in the chloroplast thylakoid membrane. The catalysed reaction is ATP + H2O + 4 H(+)(in) = ADP + phosphate + 5 H(+)(out). Functionally, produces ATP from ADP in the presence of a proton gradient across the membrane. The catalytic sites are hosted primarily by the beta subunits. This chain is ATP synthase subunit beta, chloroplastic, found in Pseudogaltonia clavata (Cape hyacinth).